Consider the following 255-residue polypeptide: Ribonuclease HII (255 aa).

Positions 72-255 (AIICGIDEVG…KSFEPIKSLL (184 aa)) constitute an RNase H type-2 domain. Aspartate 78, glutamate 79, and aspartate 170 together coordinate a divalent metal cation.

The protein belongs to the RNase HII family. Requires Mn(2+) as cofactor. It depends on Mg(2+) as a cofactor.

The protein localises to the cytoplasm. It catalyses the reaction Endonucleolytic cleavage to 5'-phosphomonoester.. Its function is as follows. Endonuclease that specifically degrades the RNA of RNA-DNA hybrids. In Staphylococcus aureus (strain MRSA252), this protein is Ribonuclease HII.